We begin with the raw amino-acid sequence, 259 residues long: Small ribosomal subunit protein uS2 (259 aa).

The segment at lysine 232–lysine 259 is disordered.

This sequence belongs to the universal ribosomal protein uS2 family.

The sequence is that of Small ribosomal subunit protein uS2 from Maridesulfovibrio salexigens (strain ATCC 14822 / DSM 2638 / NCIMB 8403 / VKM B-1763) (Desulfovibrio salexigens).